A 304-amino-acid chain; its full sequence is Glutaminase (304 aa).

Substrate-binding residues include serine 63, asparagine 114, glutamate 158, asparagine 165, tyrosine 189, tyrosine 240, and valine 258.

It belongs to the glutaminase family. As to quaternary structure, homotetramer.

It carries out the reaction L-glutamine + H2O = L-glutamate + NH4(+). The polypeptide is Glutaminase (Shewanella baltica (strain OS195)).